The sequence spans 559 residues: Alpha-(1,6)-fucosyltransferase (559 aa).

At 1–4 (MLKC) the chain is on the cytoplasmic side. Residues 5-24 (IAAVGTVVWMTMFLFLYSQL) traverse the membrane as a helical; Signal-anchor for type II membrane protein segment. The Lumenal segment spans residues 25–559 (SNNQSGGDSI…RKFKFEALLD (535 aa)). N-linked (GlcNAc...) asparagine glycosylation is present at Asn-27. The segment covering 63-74 (QERNDQHKKIME) has biased composition (basic and acidic residues). The tract at residues 63–90 (QERNDQHKKIMEQSHQLPPNPENPSLPK) is disordered. Pro residues predominate over residues 80–90 (PPNPENPSLPK). N-linked (GlcNAc...) asparagine glycosylation occurs at Asn-134. Disulfide bonds link Cys-188-Cys-251, Cys-196-Cys-214, and Cys-202-Cys-206. Positions 190–480 (EAKTLVCNLD…ADDGSKFHSL (291 aa)) constitute a GT23 domain. Residues 351-352 (RR) are important for donor substrate binding. Cys-452 and Cys-459 are oxidised to a cystine. The 62-residue stretch at 489 to 550 (QQAHEVIVIE…PSYKVVNDWR (62 aa)) folds into the SH3 domain.

The protein belongs to the glycosyltransferase 23 family. The cofactor is Mn(2+). It depends on Mg(2+) as a cofactor.

The protein localises to the golgi apparatus. It localises to the golgi stack membrane. It carries out the reaction N(4)-{beta-D-GlcNAc-(1-&gt;2)-alpha-D-Man-(1-&gt;3)-[beta-D-GlcNAc-(1-&gt;2)-alpha-D-Man-(1-&gt;6)]-beta-D-Man-(1-&gt;4)-beta-D-GlcNAc-(1-&gt;4)-beta-D-GlcNAc}-L-asparaginyl-[protein] + GDP-beta-L-fucose = an N(4)-{beta-D-GlcNAc-(1-&gt;2)-alpha-D-Man-(1-&gt;3)-[beta-D-GlcNAc-(1-&gt;2)-alpha-D-Man-(1-&gt;6)]-beta-D-Man-(1-&gt;4)-beta-D-GlcNAc-(1-&gt;4)-[alpha-L-Fuc-(1-&gt;6)]-beta-D-GlcNAc}-L-asparaginyl-[protein] + GDP + H(+). Its pathway is protein modification; protein glycosylation. With respect to regulation, inhibited by Fe(3+), Ni(2+) and Cu(2+). Functionally, catalyzes the addition of fucose in alpha 1-6 linkage to the first GlcNAc residue, next to the peptide chains in N-glycans. The addition is prevented if the GlcNAc residue is already fucosylated. Involved in susceptibility to the nematotoxic C.cinerea galectin Cgl2, likely by contributing to the synthesis of core alpha-1,6-fucosylated N-glycans to which Cgl2 binds. This Caenorhabditis elegans protein is Alpha-(1,6)-fucosyltransferase.